A 304-amino-acid chain; its full sequence is MAVHVDNVKDLAKTNEGVSVILNRYTDWKCKSGVTEAPLLPSNLGTRITDYAKTTLKGDSVALNFSDLVLSLGATVSVGTPGSVLVELINPNMDGPFQLVQGQSLSWSPGSGRPCLMIFSIHHQLTADAEPFRIRISNNGIPTKKTFARCHAYWGFDLSPRMRYYKNEPAKRIDLDVGFYKTHLSNMKQVRDYVQYTFDNSRMDGNPQLVAKSTMNVVPRIADVPKYVGIAPPSRSGNHQEATPDDWLKQYVDKDSETNKLSDVESSSDSSSLLSMRARSRRYTKNYKIPIKRHPQATGEVGTT.

The disordered stretch occupies residues E257–T304. Residues V264–R277 are compositionally biased toward low complexity. Residues A278–P295 show a composition bias toward basic residues.

In terms of biological role, cell-to-cell movement and long-distance transport of the viral infection. Also acts as a suppressor of RNA-mediated gene silencing, also known as post-transcriptional gene silencing (PTGS), a mechanism of plant viral defense that limits the accumulation of viral RNAs. This chain is Movement protein, found in Carnation ringspot virus (isolate Lommel) (CRSV).